A 94-amino-acid polypeptide reads, in one-letter code: Neurotoxin LmNaTx45.2 (94 aa).

The first 18 residues, 1-18 (MKLAILSLFLVFQIGVES), serve as a signal peptide directing secretion. The LCN-type CS-alpha/beta domain maps to 20–86 (KNGFALDHYG…IGDSRKNYCD (67 aa)). Intrachain disulfides connect Cys-34–Cys-85, Cys-44–Cys-63, Cys-48–Cys-65, and Cys-59–Cys-85.

The protein belongs to the long (4 C-C) scorpion toxin superfamily. Sodium channel inhibitor family. Beta subfamily. As to expression, expressed by the venom gland.

The protein resides in the secreted. In terms of biological role, binds voltage-independently at site-4 of sodium channels (Nav) and shift the voltage of activation toward more negative potentials thereby affecting sodium channel activation and promoting spontaneous and repetitive firing. The sequence is that of Neurotoxin LmNaTx45.2 from Lychas mucronatus (Chinese swimming scorpion).